The sequence spans 465 residues: Cysteine--tRNA ligase (465 aa).

Cys-27 is a Zn(2+) binding site. The 'HIGH' region signature appears at 29 to 39 (PTVYDDAHLGH). 3 residues coordinate Zn(2+): Cys-207, His-237, and Glu-241. Residues 269-273 (KMSKS) carry the 'KMSKS' region motif. ATP is bound at residue Lys-272.

It belongs to the class-I aminoacyl-tRNA synthetase family. In terms of assembly, monomer. The cofactor is Zn(2+).

The protein resides in the cytoplasm. The enzyme catalyses tRNA(Cys) + L-cysteine + ATP = L-cysteinyl-tRNA(Cys) + AMP + diphosphate. This is Cysteine--tRNA ligase (cysS) from Helicobacter pylori (strain ATCC 700392 / 26695) (Campylobacter pylori).